A 179-amino-acid polypeptide reads, in one-letter code: MARLKEIYRNEIAPKLKEELKLSNVMEVPRVTKITLNMGLGEAIGDKKVIEHAVADLEKITGQKPVVTFARKSIAGFKVREGWPIGVKVTLRSDKMYEFLDRLLAISLPRVRDFRGLNAKSFDGRGNYSMGVKEQIIFPEIDYDKIDALRGLDITLTTTARSDDEGRALLRAFKFPFRN.

The protein belongs to the universal ribosomal protein uL5 family. As to quaternary structure, part of the 50S ribosomal subunit; part of the 5S rRNA/L5/L18/L25 subcomplex. Contacts the 5S rRNA and the P site tRNA. Forms a bridge to the 30S subunit in the 70S ribosome.

This is one of the proteins that bind and probably mediate the attachment of the 5S RNA into the large ribosomal subunit, where it forms part of the central protuberance. In the 70S ribosome it contacts protein S13 of the 30S subunit (bridge B1b), connecting the 2 subunits; this bridge is implicated in subunit movement. Contacts the P site tRNA; the 5S rRNA and some of its associated proteins might help stabilize positioning of ribosome-bound tRNAs. In Pseudomonas putida (strain ATCC 700007 / DSM 6899 / JCM 31910 / BCRC 17059 / LMG 24140 / F1), this protein is Large ribosomal subunit protein uL5.